We begin with the raw amino-acid sequence, 110 residues long: Spermatid nuclear transition protein 3 (110 aa).

Positions arginine 80–arginine 110 are disordered.

Its subcellular location is the nucleus. The protein resides in the chromosome. Involved in nuclear basic protein transition: histones are replaced by spermatid specific proteins which are themselves replaced by protamines in late spermatids. In Ovis aries (Sheep), this protein is Spermatid nuclear transition protein 3.